Reading from the N-terminus, the 232-residue chain is Phosphatidylserine decarboxylase proenzyme (232 aa).

The active-site Schiff-base intermediate with substrate; via pyruvic acid is S201. The residue at position 201 (S201) is a Pyruvic acid (Ser); by autocatalysis.

This sequence belongs to the phosphatidylserine decarboxylase family. PSD-A subfamily. In terms of assembly, heterodimer of a large membrane-associated beta subunit and a small pyruvoyl-containing alpha subunit. Pyruvate is required as a cofactor. Post-translationally, is synthesized initially as an inactive proenzyme. Formation of the active enzyme involves a self-maturation process in which the active site pyruvoyl group is generated from an internal serine residue via an autocatalytic post-translational modification. Two non-identical subunits are generated from the proenzyme in this reaction, and the pyruvate is formed at the N-terminus of the alpha chain, which is derived from the carboxyl end of the proenzyme. The post-translation cleavage follows an unusual pathway, termed non-hydrolytic serinolysis, in which the side chain hydroxyl group of the serine supplies its oxygen atom to form the C-terminus of the beta chain, while the remainder of the serine residue undergoes an oxidative deamination to produce ammonia and the pyruvoyl prosthetic group on the alpha chain.

The protein localises to the cell membrane. It carries out the reaction a 1,2-diacyl-sn-glycero-3-phospho-L-serine + H(+) = a 1,2-diacyl-sn-glycero-3-phosphoethanolamine + CO2. It functions in the pathway phospholipid metabolism; phosphatidylethanolamine biosynthesis; phosphatidylethanolamine from CDP-diacylglycerol: step 2/2. Its function is as follows. Catalyzes the formation of phosphatidylethanolamine (PtdEtn) from phosphatidylserine (PtdSer). The chain is Phosphatidylserine decarboxylase proenzyme from Mycolicibacterium gilvum (strain PYR-GCK) (Mycobacterium gilvum (strain PYR-GCK)).